Reading from the N-terminus, the 414-residue chain is Serine hydroxymethyltransferase (414 aa).

(6S)-5,6,7,8-tetrahydrofolate is bound by residues Leu-121 and 125–127; that span reads GHL. The residue at position 229 (Lys-229) is an N6-(pyridoxal phosphate)lysine.

This sequence belongs to the SHMT family. In terms of assembly, homodimer. It depends on pyridoxal 5'-phosphate as a cofactor.

Its subcellular location is the cytoplasm. The enzyme catalyses (6R)-5,10-methylene-5,6,7,8-tetrahydrofolate + glycine + H2O = (6S)-5,6,7,8-tetrahydrofolate + L-serine. It participates in one-carbon metabolism; tetrahydrofolate interconversion. It functions in the pathway amino-acid biosynthesis; glycine biosynthesis; glycine from L-serine: step 1/1. Catalyzes the reversible interconversion of serine and glycine with tetrahydrofolate (THF) serving as the one-carbon carrier. This reaction serves as the major source of one-carbon groups required for the biosynthesis of purines, thymidylate, methionine, and other important biomolecules. Also exhibits THF-independent aldolase activity toward beta-hydroxyamino acids, producing glycine and aldehydes, via a retro-aldol mechanism. In Polynucleobacter asymbioticus (strain DSM 18221 / CIP 109841 / QLW-P1DMWA-1) (Polynucleobacter necessarius subsp. asymbioticus), this protein is Serine hydroxymethyltransferase.